A 555-amino-acid chain; its full sequence is MAMELFRVCLVVVTAIINHPLLFPRENATIPENEEEIIRKMQEHQEKLRLEQLRLEEEVSRLEAEKEALRQVEEEQQQLEAHTAWDLWTTLCMVLFLIIEVLRQNHQEGTFPECLGGDEDELSGLGGTLLQGLPLPNRATLDHFYEHCIRSTTGDATRTQEFVEGFVDDLLEALRSTYNGKTDMELEDFIGVGSMYENWQVERPLRCHLFIPFIPPEPYSFHPEFWCSSLSTPLERQGYGQIKVTLADGNPLGCVCGKAKLEEDMLCLLYGKNRGAWPSSAGCGEMEGLLCSRESSYLDVMQVMKWFQMALTRAWHRIAHKYEFDLAFGELDTPGSLKIKFRSGKSMPFILTPVIQCNDSDLYFILQLPKEPCGGGPASSAHWLLSFAVYEREFLRMTGKALPEGACHLSCLQIASFLLSKQTRLTGPSGLSDYHLKTALLHLLLSRQASDWKASKLDVRLQDLFCFLERSLLEKKLYHFFMGNHKVPEALGLPEVVRRAEPLNLFRPFVLQRTLYRNTVDSFYEMLKNAPALISEYSLHVPSVRASPPPKAVVS.

An N-terminal signal peptide occupies residues 1–15 (MAMELFRVCLVVVTA). Over 16–81 (IINHPLLFPR…VEEEQQQLEA (66 aa)) the chain is Extracellular. Asparagine 27 is a glycosylation site (N-linked (GlcNAc...) asparagine). Residues 32–84 (ENEEEIIRKMQEHQEKLRLEQLRLEEEVSRLEAEKEALRQVEEEQQQLEAHTA) are a coiled coil. The helical transmembrane segment at 82-102 (HTAWDLWTTLCMVLFLIIEVL) threads the bilayer. Over 103–555 (RQNHQEGTFP…ASPPPKAVVS (453 aa)) the chain is Cytoplasmic.

This sequence belongs to the ITPRIP family. As to quaternary structure, interacts with ITPR.

It is found in the cell membrane. The protein resides in the nucleus outer membrane. Functionally, enhances Ca(2+)-mediated inhibition of inositol 1,4,5-triphosphate receptor (ITPR) Ca(2+) release. The polypeptide is Inositol 1,4,5-trisphosphate receptor-interacting protein (Itprip) (Mus musculus (Mouse)).